Consider the following 520-residue polypeptide: Aldehyde dehydrogenase 5, mitochondrial (520 aa).

The transit peptide at Met1–Tyr23 directs the protein to the mitochondrion. Gly266–Gly271 serves as a coordination point for NAD(+). The active-site Proton acceptor is Glu288. Cys322 serves as the catalytic Nucleophile.

The protein belongs to the aldehyde dehydrogenase family.

It localises to the mitochondrion matrix. It catalyses the reaction an aldehyde + NADP(+) + H2O = a carboxylate + NADPH + 2 H(+). It carries out the reaction an aldehyde + NAD(+) + H2O = a carboxylate + NADH + 2 H(+). Its pathway is alcohol metabolism; ethanol degradation; acetate from ethanol: step 2/2. Induced by potassium ions. In terms of biological role, minor mitochondrial aldehyde dehydrogenase isoform. Plays a role in regulation or biosynthesis of electron transport chain components. Involved in the biosynthesis of acetate during anaerobic growth on glucose. This chain is Aldehyde dehydrogenase 5, mitochondrial (ALD5), found in Saccharomyces cerevisiae (strain YJM789) (Baker's yeast).